The chain runs to 220 residues: Fructose-6-phosphate aldolase 2 (220 aa).

K85 (schiff-base intermediate with substrate) is an active-site residue.

It belongs to the transaldolase family. Type 3A subfamily. In terms of assembly, homodecamer.

The protein localises to the cytoplasm. The catalysed reaction is beta-D-fructose 6-phosphate = dihydroxyacetone + D-glyceraldehyde 3-phosphate. In terms of biological role, catalyzes the reversible formation of fructose 6-phosphate from dihydroxyacetone and D-glyceraldehyde 3-phosphate via an aldolization reaction. The polypeptide is Fructose-6-phosphate aldolase 2 (fsaB) (Escherichia coli O6:H1 (strain CFT073 / ATCC 700928 / UPEC)).